The following is a 30-amino-acid chain: Cytochrome b6-f complex subunit 8 (30 aa).

A helical transmembrane segment spans residues 4–24; it reads IISLGWGSLLAIFSFSIALVV.

This sequence belongs to the PetN family. The 4 large subunits of the cytochrome b6-f complex are cytochrome b6, subunit IV (17 kDa polypeptide, PetD), cytochrome f and the Rieske protein, while the 4 small subunits are PetG, PetL, PetM and PetN. The complex functions as a dimer.

The protein resides in the plastid. Its subcellular location is the chloroplast thylakoid membrane. Its function is as follows. Component of the cytochrome b6-f complex, which mediates electron transfer between photosystem II (PSII) and photosystem I (PSI), cyclic electron flow around PSI, and state transitions. The protein is Cytochrome b6-f complex subunit 8 of Gracilaria tenuistipitata var. liui (Red alga).